Here is a 159-residue protein sequence, read N- to C-terminus: 6,7-dimethyl-8-ribityllumazine synthase (159 aa).

Residues W26, 57-59 (ALE), and 79-81 (CVV) each bind 5-amino-6-(D-ribitylamino)uracil. 84–85 (GT) is a (2S)-2-hydroxy-3-oxobutyl phosphate binding site. The active-site Proton donor is H87. Position 112 (N112) interacts with 5-amino-6-(D-ribitylamino)uracil. A (2S)-2-hydroxy-3-oxobutyl phosphate-binding site is contributed by R126.

This sequence belongs to the DMRL synthase family.

The enzyme catalyses (2S)-2-hydroxy-3-oxobutyl phosphate + 5-amino-6-(D-ribitylamino)uracil = 6,7-dimethyl-8-(1-D-ribityl)lumazine + phosphate + 2 H2O + H(+). The protein operates within cofactor biosynthesis; riboflavin biosynthesis; riboflavin from 2-hydroxy-3-oxobutyl phosphate and 5-amino-6-(D-ribitylamino)uracil: step 1/2. Its function is as follows. Catalyzes the formation of 6,7-dimethyl-8-ribityllumazine by condensation of 5-amino-6-(D-ribitylamino)uracil with 3,4-dihydroxy-2-butanone 4-phosphate. This is the penultimate step in the biosynthesis of riboflavin. The protein is 6,7-dimethyl-8-ribityllumazine synthase of Corynebacterium glutamicum (strain ATCC 13032 / DSM 20300 / JCM 1318 / BCRC 11384 / CCUG 27702 / LMG 3730 / NBRC 12168 / NCIMB 10025 / NRRL B-2784 / 534).